The primary structure comprises 1336 residues: Lysine-specific demethylase 2B (1336 aa).

The disordered stretch occupies residues 1 to 25 (MAGPQMGGSAEDHPPRKRHAAEKQK). Basic residues predominate over residues 15-25 (PRKRHAAEKQK). The residue at position 57 (S57) is a Phosphoserine. The region spanning 178–346 (FSHTKLEHLV…MQLRIYEIED (169 aa)) is the JmjC domain. T239 provides a ligand contact to substrate. Fe cation-binding residues include H242 and D244. Position 259 (K259) interacts with substrate. H314 is a Fe cation binding site. A compositionally biased stretch (acidic residues) spans 410–430 (MEEEACDQQPQEEEEKDEEGE). Residues 410–465 (MEEEACDQQPQEEEEKDEEGEGRDRAPKPPTDGSTSPTSTPSEDQEALGKKPKAPA) are disordered. A compositionally biased stretch (low complexity) spans 440-451 (TDGSTSPTSTPS). S474 and S477 each carry phosphoserine. T493 bears the Phosphothreonine mark. Phosphoserine is present on S497. A CXXC-type zinc finger spans residues 606-652 (ARRRRTRCRKCEACLRTECGECHFCKDMKKFGGPGRMKQSCIMRQCI). Zn(2+)-binding residues include C613, C616, C619, C624, C627, C630, C646, C651, C662, C665, C688, C691, H696, C699, C719, and C722. The PHD-type zinc finger occupies 659–725 (TAVCLVCGEA…CWECPKCNHA (67 aa)). 2 disordered regions span residues 727-843 (KTGK…SLSP) and 855-1034 (QLKP…SPPK). A compositionally biased stretch (basic and acidic residues) spans 749–799 (KEQKMNRDNKEGQEPAKRRSECEEAPRRRSDEHSKKVPPDGLLRRKSDDVH). The segment covering 819–843 (SSLQTSPGSSSHLSPRPPLGSSLSP) has biased composition (low complexity). Residues K857 and K890 each participate in a glycyl lysine isopeptide (Lys-Gly) (interchain with G-Cter in SUMO2) cross-link. Basic and acidic residues predominate over residues 902 to 911 (PKTRESDHSR). Over residues 932 to 941 (KVKMRRKRRL) the composition is skewed to basic residues. Residues 942–960 (PNKELSRELSKELNHEIQR) are compositionally biased toward basic and acidic residues. Residues 943 to 971 (NKELSRELSKELNHEIQRTENSLANENQQ) adopt a coiled-coil conformation. S951 is modified (phosphoserine). Polar residues predominate over residues 961 to 971 (TENSLANENQQ). A phosphoserine mark is found at S975, S979, S1018, and S1031. Low complexity predominate over residues 1014-1024 (PSLRSPPRVIS). An F-box domain is found at 1059-1105 (DGAAHVMHREVWMAVFSYLSHQDLCVCMRVCRTWNRWCCDKRLWTRI). LRR repeat units lie at residues 1093 to 1120 (NRWCCDKRLWTRIDLNHCKSITPLMLSG), 1133 to 1154 (WTNISKKQLSWLINRLPGLRDL), 1156 to 1182 (LSGCSWIAVSALCSSSCPLLRTLDVQW), 1222 to 1247 (GLDITDASLRLIIRHMPLLSKLHLSY), 1248 to 1277 (CNHVTDQSINLLTAVGTTTRDSLTEINLSD), 1278 to 1302 (CNKVTDQCLSFFKRCGNICHIDLRY), and 1303 to 1336 (CKQVTKEGCEQFIAEMSVSVQFGQVEEKLLQKLS).

The protein belongs to the JHDM1 histone demethylase family. As to quaternary structure, interacts with SKP1, forming heterodimers. The heterodimeric KDM2B-SKP1 complex interacts with the PCGF1-BCORL1 heterodimeric complex to form a homotetrameric polycomb repression complex 1 (PRC1.1). Directly interacts with CUL1. The SKP1-KDM2B complex interacts with UBB. Requires Fe(2+) as cofactor.

Its subcellular location is the nucleus. It localises to the nucleolus. The protein localises to the chromosome. The catalysed reaction is N(6),N(6)-dimethyl-L-lysyl(36)-[histone H3] + 2 2-oxoglutarate + 2 O2 = L-lysyl(36)-[histone H3] + 2 formaldehyde + 2 succinate + 2 CO2. Its activity is regulated as follows. Histone demethylase activity is inhibited by fumarate. In terms of biological role, histone demethylase that demethylates 'Lys-4' and 'Lys-36' of histone H3, thereby playing a central role in histone code. Preferentially demethylates trimethylated H3 'Lys-4' and dimethylated H3 'Lys-36' residue while it has weak or no activity for mono- and tri-methylated H3 'Lys-36'. Preferentially binds the transcribed region of ribosomal RNA and represses the transcription of ribosomal RNA genes which inhibits cell growth and proliferation. May also serve as a substrate-recognition component of the SCF (SKP1-CUL1-F-box protein)-type E3 ubiquitin ligase complex. The sequence is that of Lysine-specific demethylase 2B (KDM2B) from Homo sapiens (Human).